The chain runs to 323 residues: Ferrochelatase (323 aa).

Fe cation is bound by residues His-195 and Glu-276.

Belongs to the ferrochelatase family.

It is found in the cytoplasm. It catalyses the reaction heme b + 2 H(+) = protoporphyrin IX + Fe(2+). The protein operates within porphyrin-containing compound metabolism; protoheme biosynthesis; protoheme from protoporphyrin-IX: step 1/1. Its function is as follows. Catalyzes the ferrous insertion into protoporphyrin IX. This Mannheimia succiniciproducens (strain KCTC 0769BP / MBEL55E) protein is Ferrochelatase.